Here is a 137-residue protein sequence, read N- to C-terminus: MDLQSFSRGNPFSGLACVWCREPLTEVDAFRCMIKDFHVVYRDGVKFGACTTCLENCLDKERRLWKGVPVTGEEAQLLHGKSLDRLCIRCCYCGGKLTKNEKQRHVLYNEPFCKTRSNIIRGRCYDCCRHGSRSNYP.

Zinc fingers lie at residues cysteine 17–cysteine 53 and cysteine 90–cysteine 127.

It belongs to the papillomaviridae E6 protein family. Forms homodimers. Interacts with ubiquitin-protein ligase UBE3A/E6-AP; this interaction stimulates UBE3A ubiquitin activity. Interacts with host BAK1.

The protein localises to the host cytoplasm. It is found in the host nucleus. Plays a major role in the induction and maintenance of cellular transformation. E6 associates with host UBE3A/E6-AP ubiquitin-protein ligase and modulates its activity. Protects host keratinocytes from apoptosis by mediating the degradation of host BAK1. May also inhibit host immune response. The sequence is that of Protein E6 from Bos taurus (Bovine).